The sequence spans 130 residues: Universal stress protein MSMEG_4207 (130 aa).

Residue K104 is modified to N6-acetyllysine.

The protein belongs to the universal stress protein A family. Acetylated on Lys-104 by PatA in the presence of acetyl-CoA as an acetyl donor.

The sequence is that of Universal stress protein MSMEG_4207 from Mycolicibacterium smegmatis (strain ATCC 700084 / mc(2)155) (Mycobacterium smegmatis).